Here is an 88-residue protein sequence, read N- to C-terminus: MVRIRLARGGAKKRPFYQIIVTDNHQARDGRFIERVGFFNPLATGQAVDLRLNMDRILYWINHGAKMSERLYALIKSAKNKSQYSSAG.

The protein belongs to the bacterial ribosomal protein bS16 family.

This is Small ribosomal subunit protein bS16 from Baumannia cicadellinicola subsp. Homalodisca coagulata.